The sequence spans 124 residues: Glucagon-1 (124 aa).

Positions 1–25 (MKRIHSLAGILLVLGLIQSSCRVLM) are cleaved as a signal peptide. Positions 28 to 54 (ADPSSSLEADSTLKDEPRELSNMKRHS) are disordered. Residues 38-54 (STLKDEPRELSNMKRHS) show a composition bias toward basic and acidic residues. A propeptide spanning residues 84 to 88 (SGVAE) is cleaved from the precursor.

Belongs to the glucagon family.

The protein localises to the secreted. Functionally, glucagon plays a key role in glucose metabolism and homeostasis. Regulates blood glucose by increasing gluconeogenesis and decreasing glycolysis. This chain is Glucagon-1 (gcg1), found in Lophius americanus (American angler).